The chain runs to 417 residues: Aromatic-amino-acid aminotransferase 1 (417 aa).

Lys-258 is modified (N6-(pyridoxal phosphate)lysine).

Belongs to the class-I pyridoxal-phosphate-dependent aminotransferase family. In terms of assembly, homodimer. Pyridoxal 5'-phosphate is required as a cofactor.

The catalysed reaction is an aromatic L-alpha-amino acid + 2-oxoglutarate = an aromatic oxo-acid + L-glutamate. In terms of biological role, catalyzes the transamination of phenylalanine, tyrosine and tryptophan. Shows virtually no activity towards aspartic acid, alanine, valine or isoleucine. In Thermococcus litoralis (strain ATCC 51850 / DSM 5473 / JCM 8560 / NS-C), this protein is Aromatic-amino-acid aminotransferase 1.